A 503-amino-acid chain; its full sequence is tRNA-2-methylthio-N(6)-dimethylallyladenosine synthase (503 aa).

Residues 5–121 enclose the MTTase N-terminal domain; that stretch reads RSYEIRTFGC…LPVLLERARH (117 aa). [4Fe-4S] cluster contacts are provided by Cys-14, Cys-50, Cys-84, Cys-158, Cys-162, and Cys-165. In terms of domain architecture, Radical SAM core spans 144 to 380; sequence RESAYAGWVS…IALQEEISLA (237 aa). The TRAM domain maps to 383 to 453; sequence RELIGTEVEL…PHHLIADAPV (71 aa).

The protein belongs to the methylthiotransferase family. MiaB subfamily. In terms of assembly, monomer. It depends on [4Fe-4S] cluster as a cofactor.

It is found in the cytoplasm. The catalysed reaction is N(6)-dimethylallyladenosine(37) in tRNA + (sulfur carrier)-SH + AH2 + 2 S-adenosyl-L-methionine = 2-methylsulfanyl-N(6)-dimethylallyladenosine(37) in tRNA + (sulfur carrier)-H + 5'-deoxyadenosine + L-methionine + A + S-adenosyl-L-homocysteine + 2 H(+). Catalyzes the methylthiolation of N6-(dimethylallyl)adenosine (i(6)A), leading to the formation of 2-methylthio-N6-(dimethylallyl)adenosine (ms(2)i(6)A) at position 37 in tRNAs that read codons beginning with uridine. The sequence is that of tRNA-2-methylthio-N(6)-dimethylallyladenosine synthase from Nocardia farcinica (strain IFM 10152).